A 174-amino-acid polypeptide reads, in one-letter code: Period clock protein (174 aa).

A disordered region spans residues 46-134 (SSEGTGAGTG…GTGTGTGTGT (89 aa)). 45 repeat units span residues 49 to 50 (GT), 51 to 52 (GA), 53 to 54 (GT), 55 to 56 (GT), 57 to 58 (GT), 59 to 60 (GT), 61 to 62 (GT), 63 to 64 (GT), 65 to 66 (GT), 67 to 68 (GT), 69 to 70 (GT), 71 to 72 (GT), 73 to 74 (GT), 75 to 76 (GT), 77 to 78 (GT), 79 to 80 (GT), 81 to 82 (GT), 83 to 84 (GT), 85 to 86 (GT), 87 to 88 (GT), 89 to 90 (GT), 91 to 92 (GT), 93 to 94 (GT), 95 to 96 (GT), 97 to 98 (GT), 99 to 100 (GT), 101 to 102 (GT), 103 to 104 (GT), 105 to 106 (GT), 107 to 108 (GT), 109 to 110 (GT), 111 to 112 (GT), 113 to 114 (GT), 115 to 116 (GT), 117 to 118 (GT), 119 to 120 (GT), 121 to 122 (GT), 123 to 124 (GT), 125 to 126 (GT), 127 to 128 (GT), 129 to 130 (GT), 131 to 132 (GT), 133 to 134 (GT), 135 to 136 (GT), and 137 to 138 (GT). The interval 49-138 (GTGAGTGTGT…GTGTGTGTGT (90 aa)) is 45 X 2 AA tandem repeats of G-[TA]. A compositionally biased stretch (gly residues) spans 50–134 (TGAGTGTGTG…GTGTGTGTGT (85 aa)).

The protein resides in the plastid. The protein localises to the chloroplast. The sequence is that of Period clock protein from Acetabularia acetabulum (Mermaid's wine glass).